We begin with the raw amino-acid sequence, 939 residues long: Collagen-like protein 3 (939 aa).

N15, N35, N39, and N82 each carry an N-linked (GlcNAc...) asparagine; by host glycan. The span at 84-95 shows a compositional bias: low complexity; the sequence is SGSSGPSGPQGP. Disordered regions lie at residues 84-332 and 358-697; these read SGSS…DLGN and SIKG…KGEA. Collagen-like domains are found at residues 88 to 147, 148 to 207, 211 to 330, 364 to 423, 427 to 486, 493 to 552, 564 to 622, and 638 to 697; these read GPSG…NGDK, GNKG…KGDK, GNKG…SPDL, GDKG…SGAD, GDKG…KGEK, GESG…KGSK, GDKG…KGDV, and GDKG…KGEA. Basic and acidic residues-rich tracts occupy residues 96–110, 123–182, 189–230, 237–260, 267–288, 297–314, 360–371, 378–416, 423–491, 498–527, 537–552, 560–580, and 589–684; these read KGEK…DKGE, DADK…DPGI, DADK…DIGL, DADK…DIGP, DADK…KGTK, KGDK…DKGE, KGDKGDKGDTGL, DADK…DTGL, DADK…DVGI, DADK…DTGI, KGDK…KGSK, KGDK…DIGI, and KGDK…DKGD. Residues N788, N820, N858, N919, and N925 are each glycosylated (N-linked (GlcNAc...) asparagine; by host). A disordered region spans residues 896–923; sequence NGETGAPTTDSGTNYGAGGGGGGNGTQG. Gly residues predominate over residues 910-923; the sequence is YGAGGGGGGNGTQG.

In terms of processing, may be hydroxylated on lysine by the viral-encoded procollagen-lysine,2-oxoglutarate 5-dioxygenase.

Its subcellular location is the virion. May participate in the formation of a layer of cross-linked glycosylated fibrils at the viral surface thus giving it a hairy-like appearance. The protein is Collagen-like protein 3 of Acanthamoeba polyphaga (Amoeba).